A 154-amino-acid chain; its full sequence is PTTG1IP family member 2 (154 aa).

Residues 1–26 form the signal peptide; the sequence is MCWLRAWGQILLPVFLSLFLIQLLIS. Topologically, residues 27-97 are extracellular; sequence FSENGFIHSP…SIYWLNCKVD (71 aa). A helical transmembrane segment spans residues 98–118; that stretch reads MFGIMMLLLIAVLITGFVWYC. Residues 119–154 are Cytoplasmic-facing; it reads CAYHFYLQDLNRNRVYFYGRRETVPIHDRSATVYDE.

The protein localises to the membrane. The protein is PTTG1IP family member 2 of Homo sapiens (Human).